The chain runs to 327 residues: L-serine dehydratase/L-threonine deaminase (327 aa).

Residue alanine 2 is modified to N-acetylalanine. Lysine 41 is modified (N6-(pyridoxal phosphate)lysine). Pyridoxal 5'-phosphate is bound at residue proline 128.

It belongs to the serine/threonine dehydratase family. Homodimer. Requires pyridoxal 5'-phosphate as cofactor.

It localises to the cytoplasm. It carries out the reaction L-serine = pyruvate + NH4(+). The catalysed reaction is L-threonine = 2-oxobutanoate + NH4(+). It functions in the pathway carbohydrate biosynthesis; gluconeogenesis. Functionally, catalyzes the pyridoxal-phosphate-dependent dehydrative deamination of L-threonine and L-serine to ammonia and alpha-ketobutyrate and pyruvate, respectively. In Mus musculus (Mouse), this protein is L-serine dehydratase/L-threonine deaminase (Sds).